Consider the following 361-residue polypeptide: Myb/SANT-like DNA-binding domain-containing protein 7 (361 aa).

In terms of domain architecture, Myb-like spans 11–70 (RWSRQETRTLLSILGEAEYIQRLQTVHHNADVYQAVSKRMQQEGFRRTERQCRSKFKVLK). 2 disordered regions span residues 174–198 (TSDL…SYSS) and 217–272 (RLGV…ARRR). Polar residues-rich tracts occupy residues 187-198 (AGCSQGTPSYSS) and 226-249 (PCTS…SSSR).

In Homo sapiens (Human), this protein is Myb/SANT-like DNA-binding domain-containing protein 7.